The following is a 529-amino-acid chain: Snake venom 5'-nucleotidase (529 aa).

A signal peptide is located at residue glycine 1. Zn(2+) contacts are provided by aspartate 12 and histidine 14. A disulfide bridge links cysteine 27 with cysteine 32. Positions 60, 92, 195, and 218 each coordinate Zn(2+). N-linked (GlcNAc...) asparagine glycosylation is found at asparagine 308 and asparagine 322. Cystine bridges form between cysteine 328–cysteine 333 and cysteine 340–cysteine 362. Residue arginine 329 coordinates AMP. Positions 365, 370, and 393 each coordinate AMP. Residues cysteine 452 and cysteine 455 are joined by a disulfide bond. AMP is bound by residues phenylalanine 476 and aspartate 482. Serine 525 carries GPI-anchor amidated serine lipidation. Residues 526–529 constitute a propeptide, removed in mature form; it reads AGSL.

This sequence belongs to the 5'-nucleotidase family. It depends on Zn(2+) as a cofactor. In terms of processing, venom 5'-nucleotidases (or a part thereof) may be released into the venom via exosome-like vesicles. They may be attached via a GPI anchor to the membrane of these vesicles. Soluble forms of 5'-nucleotidase might be released by cleavage of the ectodomain in the exosome-like vesicles or venom gland cells. Expressed by the venom gland.

It localises to the membrane. The catalysed reaction is a ribonucleoside 5'-phosphate + H2O = a ribonucleoside + phosphate. In terms of biological role, hydrolyzes nucleotides into nucleosides. Snake venom 5'-nucleotidases are widely distributed among venomous snake taxa, but there is a lack of information about their biological activities. They have been shown to inhibit platelet aggregation. This effect may be due to the liberation of inhibitory AMP or adenosine by its action on ADP released upon initiation of aggregation. Venom 5'-nucleotidases are also known to synergistically act in vivo with other toxins like ADPases, phospholipases, and disintegrins to exert a more pronounced anti-coagulant effect. The chain is Snake venom 5'-nucleotidase from Naja atra (Chinese cobra).